A 519-amino-acid chain; its full sequence is Tachykinin-like peptides receptor 99D (519 aa).

Residues 1 to 100 (MENRSDFEAD…SFAFVVPWWR (100 aa)) lie on the Extracellular side of the membrane. N-linked (GlcNAc...) asparagine glycans are attached at residues asparagine 3, asparagine 19, asparagine 22, and asparagine 61. A helical transmembrane segment spans residues 101–123 (QVLWSILFGGMVIVATGGNLIVV). The Cytoplasmic portion of the chain corresponds to 124-134 (WIVMTTKRMRT). The chain crosses the membrane as a helical span at residues 135–155 (VTNYFIVNLSIADAMVSSLNV). The Extracellular segment spans residues 156–175 (TFNYYYMLDSDWPFGEFYCK). Cysteine 174 and cysteine 254 are oxidised to a cystine. The chain crosses the membrane as a helical span at residues 176 to 197 (LSQFIAMLSICASVFTLMAISI). Over 198–217 (DRYVAIIRPLQPRMSKRCNL) the chain is Cytoplasmic. Residues 218 to 238 (AIAAVIWLASTLISCPMMIIY) traverse the membrane as a helical segment. The Extracellular portion of the chain corresponds to 239 to 270 (RTEEVPVRGLSNRTVCYPEWPDGPTNHSTMES). The helical transmembrane segment at 271 to 292 (LYNILIIILTYFLPIVSMTVTY) threads the bilayer. Residues 293–324 (SRVGIELWGSKTIGECTPRQVENVRSKRRVVK) are Cytoplasmic-facing. A helical membrane pass occupies residues 325-346 (MMIVVVLIFAICWLPFHSYFII). Topologically, residues 347-361 (TSCYPAITEAPFIQE) are extracellular. Residues 362 to 384 (LYLAIYWLAMSNSMYNPIIYCWM) traverse the membrane as a helical segment. The Cytoplasmic segment spans residues 385 to 519 (NSRFRYGFKM…STANTTQLLS (135 aa)). Residue cysteine 399 is the site of S-palmitoyl cysteine attachment. A disordered region spans residues 444–519 (PSSPKSHRIS…STANTTQLLS (76 aa)). Composition is skewed to polar residues over residues 454–465 (HSGTGRSATLRN) and 487–499 (SYQQ…WSGP). Residues 500–519 (NSATAVTNSSSTANTTQLLS) show a composition bias toward low complexity.

The protein belongs to the G-protein coupled receptor 1 family. As to expression, during late embryogenesis (stages 11-15), expressed in the brain and in a specific subset of neurons in each neuromere of the developing ventral ganglion. Expressed in the cortex of the adult brain, which contains the neuronal cell bodies.

The protein localises to the cell membrane. Its function is as follows. Receptor for tachykinin-like peptides. The polypeptide is Tachykinin-like peptides receptor 99D (TkR99D) (Drosophila melanogaster (Fruit fly)).